A 346-amino-acid polypeptide reads, in one-letter code: Methylthioribose-1-phosphate isomerase (346 aa).

Residues 54-56 (RGA), Arg-91, and Gln-192 contribute to the substrate site. Asp-233 acts as the Proton donor in catalysis. 243 to 244 (NK) serves as a coordination point for substrate.

This sequence belongs to the eIF-2B alpha/beta/delta subunits family. MtnA subfamily.

It catalyses the reaction 5-(methylsulfanyl)-alpha-D-ribose 1-phosphate = 5-(methylsulfanyl)-D-ribulose 1-phosphate. The protein operates within amino-acid biosynthesis; L-methionine biosynthesis via salvage pathway; L-methionine from S-methyl-5-thio-alpha-D-ribose 1-phosphate: step 1/6. Catalyzes the interconversion of methylthioribose-1-phosphate (MTR-1-P) into methylthioribulose-1-phosphate (MTRu-1-P). The sequence is that of Methylthioribose-1-phosphate isomerase from Yersinia pseudotuberculosis serotype O:1b (strain IP 31758).